The chain runs to 164 residues: Low molecular weight protein-tyrosine-phosphatase (164 aa).

Cys-9 functions as the Nucleophile in the catalytic mechanism. The active site involves Arg-15. Asp-128 serves as the catalytic Proton donor.

It belongs to the low molecular weight phosphotyrosine protein phosphatase family.

The catalysed reaction is O-phospho-L-tyrosyl-[protein] + H2O = L-tyrosyl-[protein] + phosphate. In terms of biological role, acts on tyrosine phosphorylated proteins, low-MW aryl phosphates and natural and synthetic acyl phosphates. May be involved in the regulation of sulfur amino acid metabolism. The polypeptide is Low molecular weight protein-tyrosine-phosphatase (ptpA) (Streptomyces coelicolor (strain ATCC BAA-471 / A3(2) / M145)).